The chain runs to 766 residues: Phosphoribosylformylglycinamidine synthase subunit PurL (766 aa).

Histidine 66 is a catalytic residue. Tyrosine 69 and lysine 113 together coordinate ATP. Mg(2+) is bound at residue glutamate 115. Residues 116-119 (SHNH) and arginine 138 each bind substrate. Histidine 117 acts as the Proton acceptor in catalysis. A Mg(2+)-binding site is contributed by aspartate 139. Glutamine 264 provides a ligand contact to substrate. A Mg(2+)-binding site is contributed by aspartate 292. 336–338 (ESQ) contacts substrate. 2 residues coordinate ATP: asparagine 524 and glycine 561. Asparagine 562 lines the Mg(2+) pocket. Residue serine 564 coordinates substrate.

This sequence belongs to the FGAMS family. Monomer. Part of the FGAM synthase complex composed of 1 PurL, 1 PurQ and 2 PurS subunits.

It is found in the cytoplasm. The catalysed reaction is N(2)-formyl-N(1)-(5-phospho-beta-D-ribosyl)glycinamide + L-glutamine + ATP + H2O = 2-formamido-N(1)-(5-O-phospho-beta-D-ribosyl)acetamidine + L-glutamate + ADP + phosphate + H(+). It participates in purine metabolism; IMP biosynthesis via de novo pathway; 5-amino-1-(5-phospho-D-ribosyl)imidazole from N(2)-formyl-N(1)-(5-phospho-D-ribosyl)glycinamide: step 1/2. Functionally, part of the phosphoribosylformylglycinamidine synthase complex involved in the purines biosynthetic pathway. Catalyzes the ATP-dependent conversion of formylglycinamide ribonucleotide (FGAR) and glutamine to yield formylglycinamidine ribonucleotide (FGAM) and glutamate. The FGAM synthase complex is composed of three subunits. PurQ produces an ammonia molecule by converting glutamine to glutamate. PurL transfers the ammonia molecule to FGAR to form FGAM in an ATP-dependent manner. PurS interacts with PurQ and PurL and is thought to assist in the transfer of the ammonia molecule from PurQ to PurL. This Mycobacterium bovis (strain BCG / Pasteur 1173P2) protein is Phosphoribosylformylglycinamidine synthase subunit PurL.